Here is a 216-residue protein sequence, read N- to C-terminus: Transmembrane emp24 domain-containing protein eca (216 aa).

A signal peptide spans 1–20; that stretch reads MRDQFISLALILCVLHSACG. At 21-182 the chain is on the lumenal side; sequence LYFHISETER…FRHTSESTNS (162 aa). Positions 30–126 constitute a GOLD domain; the sequence is RKCFIEEVPD…QLRVHLDIQV (97 aa). Residues 134–164 are a coiled coil; that stretch reads ANVAQKEKLTELQLRIRQLLDQVEQITKEQN. A helical transmembrane segment spans residues 183-203; it reads RVLWWSLAQTIVLVCMGFWQM. The Cytoplasmic portion of the chain corresponds to 204-216; sequence RHLKSFFEAKKLV. The short motif at 213–216 is the Prevents secretion from ER element; the sequence is KKLV.

Belongs to the EMP24/GP25L family.

It is found in the endoplasmic reticulum membrane. Eca and bai are essential, though not redundant, for dorsoventral patterning of the embryo. Specifically required during early embryogenesis for the activity of maternal tkv, while the zygotic tkv is not affected. Involved in Golgi organization. The protein is Transmembrane emp24 domain-containing protein eca of Drosophila sechellia (Fruit fly).